Consider the following 223-residue polypeptide: MARNFLTIALPKGKLLTDSLEALTKIGIECQEVSEESRKLVFPLEKAQAQIIICRPTDIPTFVEYGAADIGFVGKDTLLEENKDVVELLDLGFGYCRFVVAMPEEKVPPRLPDGRFDLSGLNHQRVATKFPRVAEDFFREQGMQVLPIKLHGNIELAPRVGLAEMIVDIVSTGTTLRQNKLVEIAPILEATTRLIANRVAYRMKHERINELTEKLRQLLGKAP.

It belongs to the ATP phosphoribosyltransferase family. Short subfamily. In terms of assembly, heteromultimer composed of HisG and HisZ subunits.

Its subcellular location is the cytoplasm. It catalyses the reaction 1-(5-phospho-beta-D-ribosyl)-ATP + diphosphate = 5-phospho-alpha-D-ribose 1-diphosphate + ATP. Its pathway is amino-acid biosynthesis; L-histidine biosynthesis; L-histidine from 5-phospho-alpha-D-ribose 1-diphosphate: step 1/9. In terms of biological role, catalyzes the condensation of ATP and 5-phosphoribose 1-diphosphate to form N'-(5'-phosphoribosyl)-ATP (PR-ATP). Has a crucial role in the pathway because the rate of histidine biosynthesis seems to be controlled primarily by regulation of HisG enzymatic activity. This is ATP phosphoribosyltransferase from Desulfitobacterium hafniense (strain Y51).